The sequence spans 243 residues: Small ribosomal subunit protein uS3 (243 aa).

Residues 39 to 110 form the KH type-2 domain; sequence IRVFIQKKYG…QVRINVVEIE (72 aa). A disordered region spans residues 216 to 243; that stretch reads QPLPVGASPRRKGNRRPQQFEDRSNDGK. The span at 233–243 shows a compositional bias: basic and acidic residues; that stretch reads QQFEDRSNDGK.

Belongs to the universal ribosomal protein uS3 family. As to quaternary structure, part of the 30S ribosomal subunit. Forms a tight complex with proteins S10 and S14.

Its function is as follows. Binds the lower part of the 30S subunit head. Binds mRNA in the 70S ribosome, positioning it for translation. In Prochlorococcus marinus (strain SARG / CCMP1375 / SS120), this protein is Small ribosomal subunit protein uS3.